The chain runs to 215 residues: Floral homeotic protein GLOBOSA (215 aa).

The MADS-box domain occupies Arg3–Phe57. The 87-residue stretch at His84 to Asp170 folds into the K-box domain.

It is found in the nucleus. Functionally, transcription factor involved in the genetic control of flower development. Acts in conjunction with DEFICIENS (defA). The sequence is that of Floral homeotic protein GLOBOSA (GLO) from Antirrhinum majus (Garden snapdragon).